The primary structure comprises 1179 residues: Protein FAM83H (1179 aa).

A DUF1669 region spans residues 1–286 (MARRSQSSSQ…LFAQSEPLVP (286 aa)). A mediates interaction with CSNK1A1 and is required for FAM83H activity in keratin cytoskeleton organization region spans residues 1–286 (MARRSQSSSQ…LFAQSEPLVP (286 aa)). A Phosphothreonine modification is found at T465. Disordered stretches follow at residues 484–577 (ADPD…GRAG) and 636–669 (FPTKVPVPGPGSGGNGPEREGPEEPGLAKQDSFR). 6 positions are modified to phosphoserine: S513, S514, S516, S523, S647, and S667. T756 bears the Phosphothreonine mark. A phosphoserine mark is found at S759, S785, and S813. Residues 830–1026 (RLPSRFLSAQ…RGPRARLSSA (197 aa)) are disordered. A compositionally biased stretch (polar residues) spans 836–847 (LSAQSHSTSPQG). Phosphoserine occurs at positions 870 and 881. T883 carries the post-translational modification Phosphothreonine. Residues 884–906 (PGFSTRRGSPTTGFIEQKGSPTS) are compositionally biased toward polar residues. A Phosphoserine modification is found at S892. Position 894 is a phosphothreonine (T894). Phosphoserine is present on residues S903, S914, S925, S936, S945, S1003, S1009, S1024, and S1025. T1040 is subject to Phosphothreonine. Disordered stretches follow at residues 1047–1084 (ISAHGQKHRAVPAPSPGPTHNSPELGRPPAAGVLAPDM) and 1143–1165 (EEASSPGAGEGPAEEGTRDSKVG). S1048, S1068, and S1147 each carry phosphoserine.

This sequence belongs to the FAM83 family. As to quaternary structure, directly interacts (via DUF1669) with casein kinase isoforms CSNK1A1, CSNK1A1L, CSNK1D and CSNK1E. Interaction with CSNK1A1 recruits CSNK1A1 to keratin filaments. Interacts with KRT18 and probably other keratins. As to expression, expressed in the tooth follicle.

Its subcellular location is the cytoplasm. The protein resides in the cytoskeleton. In terms of biological role, may play a major role in the structural organization and calcification of developing enamel. May play a role in keratin cytoskeleton disassembly by recruiting CSNK1A1 to keratin filaments. Thereby, it may regulate epithelial cell migration. The polypeptide is Protein FAM83H (Homo sapiens (Human)).